The primary structure comprises 451 residues: UPF0210 protein LMHCC_2097 (451 aa).

This sequence belongs to the UPF0210 family. In terms of assembly, homodimer.

This is UPF0210 protein LMHCC_2097 from Listeria monocytogenes serotype 4a (strain HCC23).